The chain runs to 158 residues: Cyclic pyranopterin monophosphate synthase (158 aa).

Substrate-binding positions include 76 to 78 (MCH) and 114 to 115 (ME). Residue Asp129 is part of the active site.

The protein belongs to the MoaC family. As to quaternary structure, homohexamer; trimer of dimers.

The enzyme catalyses (8S)-3',8-cyclo-7,8-dihydroguanosine 5'-triphosphate = cyclic pyranopterin phosphate + diphosphate. It participates in cofactor biosynthesis; molybdopterin biosynthesis. Catalyzes the conversion of (8S)-3',8-cyclo-7,8-dihydroguanosine 5'-triphosphate to cyclic pyranopterin monophosphate (cPMP). The polypeptide is Cyclic pyranopterin monophosphate synthase (Clostridium perfringens (strain 13 / Type A)).